The chain runs to 175 residues: uncharacterized protein (175 aa).

The segment covering 1 to 17 (MKVEGGESMHESEEGRD) has biased composition (basic and acidic residues). The tract at residues 1 to 21 (MKVEGGESMHESEEGRDVPNG) is disordered.

This is an uncharacterized protein from Bacillus thuringiensis subsp. kurstaki.